The primary structure comprises 637 residues: 1-deoxy-D-xylulose-5-phosphate synthase (637 aa).

Thiamine diphosphate contacts are provided by residues His-76 and 117–119 (GHS). Asp-148 contacts Mg(2+). Thiamine diphosphate contacts are provided by residues 149-150 (GA), Asn-177, Tyr-294, and Glu-381. Position 177 (Asn-177) interacts with Mg(2+).

This sequence belongs to the transketolase family. DXPS subfamily. Homodimer. Mg(2+) serves as cofactor. Requires thiamine diphosphate as cofactor.

The enzyme catalyses D-glyceraldehyde 3-phosphate + pyruvate + H(+) = 1-deoxy-D-xylulose 5-phosphate + CO2. The protein operates within metabolic intermediate biosynthesis; 1-deoxy-D-xylulose 5-phosphate biosynthesis; 1-deoxy-D-xylulose 5-phosphate from D-glyceraldehyde 3-phosphate and pyruvate: step 1/1. Functionally, catalyzes the acyloin condensation reaction between C atoms 2 and 3 of pyruvate and glyceraldehyde 3-phosphate to yield 1-deoxy-D-xylulose-5-phosphate (DXP). This is 1-deoxy-D-xylulose-5-phosphate synthase from Neisseria gonorrhoeae (strain ATCC 700825 / FA 1090).